A 214-amino-acid polypeptide reads, in one-letter code: MQLFHLCLIISCTCPTIQASKLCLGWLWGMDIDPYKEFGATVELLSFLPSDFFPSVRDLLDTASALYREALESPEHCSPHHTALRQAILCWGDVTNLATWVGTNLDDPASRDLVVNYVNTNMGLKIRQLLWFHISCLTFGRETVLEYLVSFGVWIRTPPAYRPPNAPILSTLPETTVVRRRDRGRSPRRRTPSPRRRRSQSPRRRRSQSRESQC.

The N-terminal stretch at 1–19 (MQLFHLCLIISCTCPTIQA) is a signal peptide. Residues 25 to 27 (GWL) are HBEAG. A disordered region spans residues 165–214 (NAPILSTLPETTVVRRRDRGRSPRRRTPSPRRRRSQSPRRRRSQSRESQC). The segment covering 178–207 (VRRRDRGRSPRRRTPSPRRRRSQSPRRRRS) has biased composition (basic residues). A 1; half-length repeat occupies 186 to 192 (SPRRRTP). Residues 186–208 (SPRRRTPSPRRRRSQSPRRRRSQ) form a 3 X 8 AA repeats of S-P-R-R-R-R-S-Q region. A propeptide spanning residues 186–214 (SPRRRTPSPRRRRSQSPRRRRSQSRESQC) is cleaved from the precursor. 2 repeat units span residues 193 to 200 (SPRRRRSQ) and 201 to 208 (SPRRRRSQ).

Belongs to the orthohepadnavirus precore antigen family. As to quaternary structure, homodimerizes. Phosphorylated. Post-translationally, cleaved by host furin.

It is found in the secreted. Its subcellular location is the host nucleus. Functionally, may regulate immune response to the intracellular capsid in acting as a T-cell tolerogen, by having an immunoregulatory effect which prevents destruction of infected cells by cytotoxic T-cells. This immune regulation may predispose to chronicity during perinatal infections and prevent severe liver injury during adult infections. In Homo sapiens (Human), this protein is External core antigen.